The sequence spans 222 residues: N-acetyltransferase 8F1 (222 aa).

Residues 53–73 (LVLVSGSWILAVICIFFLLLL) traverse the membrane as a helical segment. An N-acetyltransferase domain is found at 69–220 (FLLLLLRLLA…CTIQLKYSFP (152 aa)).

The protein belongs to the camello family.

Its subcellular location is the membrane. Functionally, may play a role in regulation of gastrulation. The polypeptide is N-acetyltransferase 8F1 (Mus musculus (Mouse)).